Here is a 481-residue protein sequence, read N- to C-terminus: Ribulose bisphosphate carboxylase large chain (481 aa).

A propeptide spanning residues 1–2 is cleaved from the precursor; it reads MS. At Pro3 the chain carries N-acetylproline. At Lys14 the chain carries N6,N6,N6-trimethyllysine. Residues Asn123 and Thr173 each coordinate substrate. Lys175 functions as the Proton acceptor in the catalytic mechanism. Lys177 lines the substrate pocket. Residues Lys201, Asp203, and Glu204 each contribute to the Mg(2+) site. Lys201 is subject to N6-carboxylysine. His294 (proton acceptor) is an active-site residue. Positions 295, 327, and 379 each coordinate substrate.

Belongs to the RuBisCO large chain family. Type I subfamily. Heterohexadecamer of 8 large chains and 8 small chains; disulfide-linked. The disulfide link is formed within the large subunit homodimers. Mg(2+) serves as cofactor. Post-translationally, the disulfide bond which can form in the large chain dimeric partners within the hexadecamer appears to be associated with oxidative stress and protein turnover.

The protein localises to the plastid. The catalysed reaction is 2 (2R)-3-phosphoglycerate + 2 H(+) = D-ribulose 1,5-bisphosphate + CO2 + H2O. It carries out the reaction D-ribulose 1,5-bisphosphate + O2 = 2-phosphoglycolate + (2R)-3-phosphoglycerate + 2 H(+). In terms of biological role, ruBisCO catalyzes two reactions: the carboxylation of D-ribulose 1,5-bisphosphate, the primary event in carbon dioxide fixation, as well as the oxidative fragmentation of the pentose substrate in the photorespiration process. Both reactions occur simultaneously and in competition at the same active site. The sequence is that of Ribulose bisphosphate carboxylase large chain from Cuscuta gronovii (Common dodder).